The following is a 356-amino-acid chain: Histidinol-phosphate aminotransferase (356 aa).

Lysine 211 is subject to N6-(pyridoxal phosphate)lysine.

This sequence belongs to the class-II pyridoxal-phosphate-dependent aminotransferase family. Histidinol-phosphate aminotransferase subfamily. In terms of assembly, homodimer. Requires pyridoxal 5'-phosphate as cofactor.

It carries out the reaction L-histidinol phosphate + 2-oxoglutarate = 3-(imidazol-4-yl)-2-oxopropyl phosphate + L-glutamate. The protein operates within amino-acid biosynthesis; L-histidine biosynthesis; L-histidine from 5-phospho-alpha-D-ribose 1-diphosphate: step 7/9. The polypeptide is Histidinol-phosphate aminotransferase (Blochmanniella floridana).